Consider the following 396-residue polypeptide: Metallophosphoesterase 1 (396 aa).

Residues 27–47 (IAVVFAVLLFCEFLIYYLAIF) form a helical membrane-spanning segment. Residues Asp-77, Asp-119, Asn-157, His-249, His-303, and His-305 each coordinate a divalent metal cation. A helical membrane pass occupies residues 356-376 (VVLVIYCGAVGFLVVLTLSHL). The short motif at 392–396 (KRKTR) is the Di-lysine motif element.

It belongs to the metallophosphoesterase superfamily. MPPE1 family. As to quaternary structure, interacts with GPI-anchor proteins (via the GPI portion). Interacts with TMED10. Requires Mn(2+) as cofactor.

The protein localises to the endoplasmic reticulum-Golgi intermediate compartment membrane. Functionally, metallophosphoesterase that catalyzes the removal of a side-chain ethanolamine-phosphate (EtNP) from the second mannose of the GPI-anchor protein intermediate. Participates in the glycan remodeling steps of GPI-anchor maturation to allow an efficient transport of GPI-anchor proteins from the endoplasmic reticulum to the Golgi. This chain is Metallophosphoesterase 1, found in Macaca fascicularis (Crab-eating macaque).